The sequence spans 207 residues: Protein GrpE (207 aa).

Residues 1–11 (MTETDGQKDNN) show a composition bias toward basic and acidic residues. Residues 1–40 (MTETDGQKDNNQDTAQAAADPVVSKPYIMPDDPEEGSNEA) are disordered.

Belongs to the GrpE family. As to quaternary structure, homodimer.

It is found in the cytoplasm. Participates actively in the response to hyperosmotic and heat shock by preventing the aggregation of stress-denatured proteins, in association with DnaK and GrpE. It is the nucleotide exchange factor for DnaK and may function as a thermosensor. Unfolded proteins bind initially to DnaJ; upon interaction with the DnaJ-bound protein, DnaK hydrolyzes its bound ATP, resulting in the formation of a stable complex. GrpE releases ADP from DnaK; ATP binding to DnaK triggers the release of the substrate protein, thus completing the reaction cycle. Several rounds of ATP-dependent interactions between DnaJ, DnaK and GrpE are required for fully efficient folding. The sequence is that of Protein GrpE from Rhodopseudomonas palustris (strain ATCC BAA-98 / CGA009).